A 274-amino-acid polypeptide reads, in one-letter code: MAALDGLPPLRDVIQRHGLDAKKALGQNFLLDLNLTQKIARTAGPLEDVTVIEVGPGPGGLTRAILALGAKKVVAIERDSRCLPALAEIGAHYPGRLDIIEDDALKVDFEALADGPVRIIANLPYNVGTQLLVNWLLPGLWPPFWQSMTLMFQREVGLRIVAGADDDHYGRLGVLCGWRTKARLAFDVPPQAFTPPPKVTSTVVHLEPVEAPIPCSPAVLEKVTQAAFGQRRKMLRQSLKPLGGEALLAKAGIDPQRRAETLTVEEFCRLANCL.

6 residues coordinate S-adenosyl-L-methionine: asparagine 28, leucine 30, glycine 55, glutamate 77, aspartate 103, and asparagine 122.

This sequence belongs to the class I-like SAM-binding methyltransferase superfamily. rRNA adenine N(6)-methyltransferase family. RsmA subfamily.

It localises to the cytoplasm. The enzyme catalyses adenosine(1518)/adenosine(1519) in 16S rRNA + 4 S-adenosyl-L-methionine = N(6)-dimethyladenosine(1518)/N(6)-dimethyladenosine(1519) in 16S rRNA + 4 S-adenosyl-L-homocysteine + 4 H(+). In terms of biological role, specifically dimethylates two adjacent adenosines (A1518 and A1519) in the loop of a conserved hairpin near the 3'-end of 16S rRNA in the 30S particle. May play a critical role in biogenesis of 30S subunits. The protein is Ribosomal RNA small subunit methyltransferase A of Rhizobium meliloti (strain 1021) (Ensifer meliloti).